Reading from the N-terminus, the 1101-residue chain is Furin-like protease 1, isoform 1-CRR (1101 aa).

The interval 1–57 (MKNDVVRWSRQPTSNTTNSSSSSRSDSNSTHKHRSKSNKLNARQLGSNAARSCQQRS) is disordered. Residues 13–28 (TSNTTNSSSSSRSDSN) show a composition bias toward low complexity. 3 N-linked (GlcNAc...) asparagine glycosylation sites follow: asparagine 15, asparagine 18, and asparagine 28. The span at 38-57 (NKLNARQLGSNAARSCQQRS) shows a compositional bias: polar residues. Asparagine 108 is a glycosylation site (N-linked (GlcNAc...) asparagine). Residues 119-139 (VFLLALQFSAVVFLCNINVGF) form a helical membrane-spanning segment. The segment covering 150–163 (SAGGSSPAAPSSAP) has biased composition (low complexity). A disordered region spans residues 150 to 187 (SAGGSSPAAPSSAPSSPPTVAVPPPPPPSSALKVDPNG). A compositionally biased stretch (pro residues) spans 164 to 178 (SSPPTVAVPPPPPPS). An N-linked (GlcNAc...) asparagine glycan is attached at asparagine 333. One can recognise a Peptidase S8 domain in the interval 340–654 (MWYLNRGGGL…YGLMDAAEMV (315 aa)). Active-site charge relay system residues include aspartate 372 and histidine 413. Residue asparagine 426 is glycosylated (N-linked (GlcNAc...) asparagine). 2 cysteine pairs are disulfide-bonded: cysteine 430/cysteine 579 and cysteine 522/cysteine 552. The Charge relay system role is filled by serine 587. N-linked (GlcNAc...) asparagine glycosylation occurs at asparagine 606. Residues 662-791 (AVPEQQRCEI…DMIFYGTETP (130 aa)) form the P/Homo B domain. The cysteines at positions 669 and 695 are disulfide-linked. Residues asparagine 727 and asparagine 859 are each glycosylated (N-linked (GlcNAc...) asparagine). Positions 886 to 915 (EEDEQDDEVTRGPVNPYSSSPMDHSLLMSN) are disordered. Over residues 901-915 (PYSSSPMDHSLLMSN) the composition is skewed to polar residues. Asparagine 978 carries N-linked (GlcNAc...) asparagine glycosylation. The chain crosses the membrane as a helical span at residues 1014-1034 (TVLLLVSVIFTLMGVAVAGGI).

The protein belongs to the peptidase S8 family. Furin subfamily. The cofactor is Ca(2+). As to expression, in adults, isoform 1-CRR is expressed in CNS, fat body, and female reproductive tissues, and in embryos, in anal pads, hindgut, developing antennomaxillary complex, oenocytes, clipeolabrum, pharynx, trachea, CNS and developing posterior spiracles.

It is found in the golgi apparatus membrane. The enzyme catalyses Release of mature proteins from their proproteins by cleavage of -Arg-Xaa-Yaa-Arg-|-Zaa- bonds, where Xaa can be any amino acid and Yaa is Arg or Lys. Releases albumin, complement component C3 and von Willebrand factor from their respective precursors.. Functionally, furin is likely to represent the ubiquitous endoprotease activity within constitutive secretory pathways and capable of cleavage at the RX(K/R)R consensus motif. The sequence is that of Furin-like protease 1, isoform 1-CRR (Fur1) from Drosophila melanogaster (Fruit fly).